Reading from the N-terminus, the 668-residue chain is Fructose-1,6-bisphosphatase class 3 (668 aa).

The protein belongs to the FBPase class 3 family. Mn(2+) is required as a cofactor.

The enzyme catalyses beta-D-fructose 1,6-bisphosphate + H2O = beta-D-fructose 6-phosphate + phosphate. It functions in the pathway carbohydrate biosynthesis; gluconeogenesis. The protein is Fructose-1,6-bisphosphatase class 3 of Clostridium botulinum (strain Langeland / NCTC 10281 / Type F).